The chain runs to 467 residues: Fumarate hydratase class II (467 aa).

Substrate-binding positions include serine 98–threonine 100, arginine 126, histidine 129–aspartate 132, serine 139–asparagine 141, and threonine 187. Histidine 188 functions as the Proton donor/acceptor in the catalytic mechanism. Serine 318 is a catalytic residue. Residues serine 319 and lysine 324 to asparagine 326 each bind substrate.

The protein belongs to the class-II fumarase/aspartase family. Fumarase subfamily. Homotetramer.

The protein localises to the cytoplasm. It carries out the reaction (S)-malate = fumarate + H2O. Its pathway is carbohydrate metabolism; tricarboxylic acid cycle; (S)-malate from fumarate: step 1/1. Inhibited by ATP, citrate and S-2,3-dicarboxyaziridine. Functionally, involved in the TCA cycle. FumC seems to be a backup enzyme for FumA under conditions of iron limitation and oxidative stress. Catalyzes the stereospecific interconversion of fumarate to L-malate. The sequence is that of Fumarate hydratase class II from Escherichia coli (strain K12).